The following is a 64-amino-acid chain: Phi-buthitoxin-Hj1a (64 aa).

The first 18 residues, 1 to 18 (MNSFVVVLLLFIAILCNA), serve as a signal peptide directing secretion. Disulfide bonds link cysteine 29–cysteine 43, cysteine 36–cysteine 49, and cysteine 42–cysteine 58.

The protein belongs to the scorpion calcin-like family. As to expression, expressed by the venom gland.

Its subcellular location is the secreted. Functionally, may increase intracellular calcium release through the activation of nuclear inositol 1,4,5-trisphosphate receptors (ITPR) of cardiomyocytes, thereby causing an increase in the contraction frequency of these cells. In Hottentotta judaicus (Black scorpion), this protein is Phi-buthitoxin-Hj1a.